The primary structure comprises 370 residues: Protein SUPPRESSOR OF NIM1 1 (370 aa).

Positions 1-43 (MALPWELEEDILSRLPPISLVRFRTVSKHWNSLFNDKTFINNH) constitute an F-box domain.

Ubiquitous, at low levels.

Its function is as follows. Negatively regulates a plant defense signaling pathway which is independent of salicylic acid (SA) and systemic acquired resistance (SAR). Confers sensitivity to P.syringae and P.parasitica. This chain is Protein SUPPRESSOR OF NIM1 1 (SON1), found in Arabidopsis thaliana (Mouse-ear cress).